The sequence spans 102 residues: Thioredoxin (102 aa).

Residues 2 to 102 (LHIDELTFEN…ILIHTINKYL (101 aa)) form the Thioredoxin domain. Catalysis depends on nucleophile residues Cys-29 and Cys-32. Cysteines 29 and 32 form a disulfide.

It belongs to the thioredoxin family.

It localises to the plastid. The protein resides in the chloroplast. Participates in various redox reactions through the reversible oxidation of its active center dithiol to a disulfide and catalyzes dithiol-disulfide exchange reactions. This is Thioredoxin (trxA) from Cyanidioschyzon merolae (strain NIES-3377 / 10D) (Unicellular red alga).